Here is a 743-residue protein sequence, read N- to C-terminus: 1,4-alpha-glucan branching enzyme GlgB 2 (743 aa).

The disordered stretch occupies residues 1 to 23 (MSERQGGQEQRTEADGMTTEGIS). The active-site Nucleophile is Asp-422. Glu-475 acts as the Proton donor in catalysis.

This sequence belongs to the glycosyl hydrolase 13 family. GlgB subfamily. As to quaternary structure, monomer.

The catalysed reaction is Transfers a segment of a (1-&gt;4)-alpha-D-glucan chain to a primary hydroxy group in a similar glucan chain.. Its pathway is glycan biosynthesis; glycogen biosynthesis. Catalyzes the formation of the alpha-1,6-glucosidic linkages in glycogen by scission of a 1,4-alpha-linked oligosaccharide from growing alpha-1,4-glucan chains and the subsequent attachment of the oligosaccharide to the alpha-1,6 position. In Xanthomonas euvesicatoria pv. vesicatoria (strain 85-10) (Xanthomonas campestris pv. vesicatoria), this protein is 1,4-alpha-glucan branching enzyme GlgB 2.